Reading from the N-terminus, the 755-residue chain is Photosystem I P700 chlorophyll a apoprotein A1 (755 aa).

8 helical membrane-spanning segments follow: residues 72–95 (IFSA…YHGA), 158–181 (LLCT…FHYH), 197–221 (LNHH…HVAI), 297–315 (QAHH…GHMY), 352–375 (WHAQ…QHMY), 391–417 (ISLF…IYMV), 439–461 (AIIS…FYVH), and 536–554 (FMVH…LILL). [4Fe-4S] cluster is bound by residues C578 and C587. 2 helical membrane-spanning segments follow: residues 594-615 (HVFL…HFSW) and 669-691 (LSAY…MFLF). H680 lines the chlorophyll a' pocket. Chlorophyll a contacts are provided by M688 and Y696. W697 provides a ligand contact to phylloquinone. The chain crosses the membrane as a helical span at residues 729 to 749 (AVGVAHYLLGGIVTTWAFFLA).

Belongs to the PsaA/PsaB family. The PsaA/B heterodimer binds the P700 chlorophyll special pair and subsequent electron acceptors. PSI consists of a core antenna complex that captures photons, and an electron transfer chain that converts photonic excitation into a charge separation. The cyanobacterial PSI reaction center is composed of one copy each of PsaA,B,C,D,E,F,I,J,K,L,M and X, and forms trimeric complexes. PSI electron transfer chain: 5 chlorophyll a, 1 chlorophyll a', 2 phylloquinones and 3 4Fe-4S clusters. PSI core antenna: 90 chlorophyll a, 22 carotenoids, 3 phospholipids and 1 galactolipid. P700 is a chlorophyll a/chlorophyll a' dimer, A0 is one or more chlorophyll a, A1 is one or both phylloquinones and FX is a shared 4Fe-4S iron-sulfur center. serves as cofactor.

Its subcellular location is the cellular thylakoid membrane. The enzyme catalyses reduced [plastocyanin] + hnu + oxidized [2Fe-2S]-[ferredoxin] = oxidized [plastocyanin] + reduced [2Fe-2S]-[ferredoxin]. In terms of biological role, psaA and PsaB bind P700, the primary electron donor of photosystem I (PSI), as well as the electron acceptors A0, A1 and FX. PSI is a plastocyanin/cytochrome c6-ferredoxin oxidoreductase, converting photonic excitation into a charge separation, which transfers an electron from the donor P700 chlorophyll pair to the spectroscopically characterized acceptors A0, A1, FX, FA and FB in turn. Oxidized P700 is reduced on the lumenal side of the thylakoid membrane by plastocyanin or cytochrome c6. The chain is Photosystem I P700 chlorophyll a apoprotein A1 from Synechococcus sp. (strain JA-3-3Ab) (Cyanobacteria bacterium Yellowstone A-Prime).